The sequence spans 140 residues: Large ribosomal subunit protein bL17 (140 aa).

The disordered stretch occupies residues 119–140 (DTTAKGQDSGPVQVEEQENEEA).

This sequence belongs to the bacterial ribosomal protein bL17 family. In terms of assembly, part of the 50S ribosomal subunit. Contacts protein L32.

The polypeptide is Large ribosomal subunit protein bL17 (Zymomonas mobilis subsp. mobilis (strain ATCC 31821 / ZM4 / CP4)).